Consider the following 571-residue polypeptide: Hemagglutinin-neuraminidase (571 aa).

Over 1-26 (MDRAVGRVALENEEREAKNTWRFVFR) the chain is Intravirion. A helical transmembrane segment spans residues 27–47 (IAIFLLIVITLAISAAALVYS). At 48–571 (MEASTPGDLV…LVEILKEDGV (524 aa)) the chain is on the virion surface side. N-linked (GlcNAc...) asparagine; by host glycosylation is present at Asn119. Positions 124–152 (GAPVHDPDYIGGIGKELIVDDASDVTSFY) are important for interaction with fusion/F protein. Cystine bridges form between Cys172–Cys196, Cys186–Cys247, and Cys238–Cys251. The involved in neuraminidase activity stretch occupies residues 234–239 (NRKSCS). N-linked (GlcNAc...) asparagine; by host glycans are attached at residues Asn341 and Asn433. Cystine bridges form between Cys344–Cys461 and Cys455–Cys465. Asn481, Asn508, and Asn538 each carry an N-linked (GlcNAc...) asparagine; by host glycan. Cys531 and Cys542 form a disulfide bridge.

The protein belongs to the paramyxoviruses hemagglutinin-neuraminidase family. Homotetramer; composed of disulfide-linked homodimers. Interacts with F protein trimer. Interacts with host CG-1B; this interaction inhibits viral adsorption and replication rather than internalization.

The protein localises to the virion membrane. Its subcellular location is the host cell membrane. It carries out the reaction Hydrolysis of alpha-(2-&gt;3)-, alpha-(2-&gt;6)-, alpha-(2-&gt;8)- glycosidic linkages of terminal sialic acid residues in oligosaccharides, glycoproteins, glycolipids, colominic acid and synthetic substrates.. In terms of biological role, mediates the viral entry into the host cell together with fusion/F protein. Attaches the virus to sialic acid-containing cell receptors and thereby initiates infection. Binding of HN protein to the receptor induces a conformational change that allows the F protein to trigger virion/cell membranes fusion. Its function is as follows. Neuraminidase activity ensures the efficient spread of the virus by dissociating the mature virions from the neuraminic acid containing glycoproteins. The chain is Hemagglutinin-neuraminidase (HN) from Gallus gallus (Chicken).